A 509-amino-acid chain; its full sequence is MTVTISFEPYVGSSVDALSIPLYLRCQLVFKLSKPLAAVPLLESGVNRLVQALPFLSGEFTAVPASDGGKEILLVRPVLNFELSRILKIKYHETSLRHVCKQMNRPSSQGGDLPHEPYMPYPRLPDPSRPQPIVGFQVNVHTDGIILSVATHHCSFDATGMGSIVQNLAACCRSPPSDEPDLTTSPAQEAEARKVLSQVRETPFDPKMFPEYRPLDSMLSYYKGVQSALQGRQTTIVNRCFTIAADKINALKRRCNQLIPEMVKKYGLSTEDAIGSAWVSSNDVVAALLWTCINRARYPEIRERSVHQLPPDLLHATSSLGVPVNVRSRLSPPLPKSTLGNAVCLLREKVPLQFFALPSHANMEATSSVCADHSGDDEWALSFCRVAYGLRAKLNAIDDDYIRDYISYVQKSPCHLSVTLDTENLYLSNWREIGVYDADFGGMLGKPLRMRAPDGYTDGLIFVMAQRSEDKSAPWEFNISLEASTMKRIVHDPLWCKYVELDAFWHGEE.

Belongs to the fumigaclavine B O-acetyltransferase family. Monomer.

It carries out the reaction (2R,3S,11R)-aszonalenin + acetyl-CoA = (2R,3S,11R)-acetylaszonalenin + CoA. It participates in alkaloid biosynthesis. In terms of biological role, O-acetyltransferase; part of the gene cluster that mediates the biosynthesis of the prenylated pyrroloindoline diketopiperazine acetylaszonalenin. The first step in the pathway is the formation of (R)-benzodiazepinedione by condensation of tryptophan and anthranilic acid catalyzed by the non-ribosomal peptide synthetase anaPS. The prenyltransferase anaPT then converts (R)-benzodiazepinedione to aszonalenin in the presence of dimethylallyl diphosphate (DMAPP) via C3-prenylation. The last step in the biosynthesis of acetylaszonalenin via acetylation of aszonalenin at position N1 catalyzed by anaAT. The chain is O-acetyltransferase anaAT from Neosartorya fischeri (strain ATCC 1020 / DSM 3700 / CBS 544.65 / FGSC A1164 / JCM 1740 / NRRL 181 / WB 181) (Aspergillus fischerianus).